The sequence spans 404 residues: Homocysteine-responsive endoplasmic reticulum-resident ubiquitin-like domain member 2 protein (404 aa).

The 80-residue stretch at 10 to 89 (VTLIIKAPNQ…HMVHLVCASR (80 aa)) folds into the Ubiquitin-like domain. Residues 86 to 153 (CASRSPPSSP…TLSQAQTDPA (68 aa)) form a disordered region. Low complexity-rich tracts occupy residues 88 to 97 (SRSPPSSPKS) and 109 to 126 (SSTS…PSPS). Residues 127–153 (QESLSLVTGSSEGLRQRTLSQAQTDPA) show a composition bias toward polar residues. A helical transmembrane segment spans residues 301-321 (FIMVMGAMLLVYLHQAGWFPF).

It is found in the membrane. Its function is as follows. Could be involved in the unfolded protein response (UPR) pathway. The chain is Homocysteine-responsive endoplasmic reticulum-resident ubiquitin-like domain member 2 protein (Herpud2) from Mus musculus (Mouse).